The sequence spans 596 residues: Chaperone protein DnaK (596 aa).

Position 180 is a phosphothreonine; by autocatalysis (Thr-180).

This sequence belongs to the heat shock protein 70 family.

Its function is as follows. Acts as a chaperone. The sequence is that of Chaperone protein DnaK from Thermosipho melanesiensis (strain DSM 12029 / CIP 104789 / BI429).